Consider the following 177-residue polypeptide: Large ribosomal subunit protein uL6 (177 aa).

It belongs to the universal ribosomal protein uL6 family. In terms of assembly, part of the 50S ribosomal subunit.

Its function is as follows. This protein binds to the 23S rRNA, and is important in its secondary structure. It is located near the subunit interface in the base of the L7/L12 stalk, and near the tRNA binding site of the peptidyltransferase center. The polypeptide is Large ribosomal subunit protein uL6 (Rickettsia conorii (strain ATCC VR-613 / Malish 7)).